The chain runs to 297 residues: Phosphate import ATP-binding protein PstB (297 aa).

The ABC transporter domain occupies 50–292; the sequence is MRLRDVEVFY…PEHDLTEAYI (243 aa). 82-89 provides a ligand contact to ATP; that stretch reads GPSGCGKS.

It belongs to the ABC transporter superfamily. Phosphate importer (TC 3.A.1.7) family. In terms of assembly, the complex is composed of two ATP-binding proteins (PstB), two transmembrane proteins (PstC and PstA) and a solute-binding protein (PstS).

Its subcellular location is the cell inner membrane. The enzyme catalyses phosphate(out) + ATP + H2O = ADP + 2 phosphate(in) + H(+). Functionally, part of the ABC transporter complex PstSACB involved in phosphate import. Responsible for energy coupling to the transport system. The polypeptide is Phosphate import ATP-binding protein PstB (Alcanivorax borkumensis (strain ATCC 700651 / DSM 11573 / NCIMB 13689 / SK2)).